The sequence spans 314 residues: Coiled-coil domain-containing protein 42 like-2 (314 aa).

Coiled coils occupy residues 34–133 (RLLE…KGTL) and 175–231 (NKLL…FQWE).

This sequence belongs to the CFAP73 family.

The chain is Coiled-coil domain-containing protein 42 like-2 from Xenopus tropicalis (Western clawed frog).